The sequence spans 101 residues: Urease subunit beta (101 aa).

Belongs to the urease beta subunit family. In terms of assembly, heterotrimer of UreA (gamma), UreB (beta) and UreC (alpha) subunits. Three heterotrimers associate to form the active enzyme.

The protein resides in the cytoplasm. It carries out the reaction urea + 2 H2O + H(+) = hydrogencarbonate + 2 NH4(+). Its pathway is nitrogen metabolism; urea degradation; CO(2) and NH(3) from urea (urease route): step 1/1. The chain is Urease subunit beta from Thermosynechococcus vestitus (strain NIES-2133 / IAM M-273 / BP-1).